The sequence spans 308 residues: 26S proteasome regulatory subunit rpn11 (308 aa).

Positions 30–165 constitute an MPN domain; it reads VYISSLALLK…IDAFRLINPS (136 aa). Residues His-112, His-114, and Asp-125 each coordinate Zn(2+). Residues 112–125 carry the JAMM motif motif; the sequence is HSHPGFGCWLSSVD.

This sequence belongs to the peptidase M67A family. In terms of assembly, the 26S proteasome is composed of a core protease, known as the 20S proteasome, capped at one or both ends by the 19S regulatory complex (RC). The RC is composed of at least 18 different subunits in two subcomplexes, the base and the lid, which form the portions proximal and distal to the 20S proteolytic core, respectively.

Its function is as follows. Acts as a regulatory subunit of the 26 proteasome which is involved in the ATP-dependent degradation of ubiquitinated proteins. Functionally, transcription factor pap1 is controlled by the functional interaction between the positive regulator pad1 and negative regulator crm1. Both these proteins are also essential for cell viability and for the maintenance of chromosome structure. Pad1 is also responsible for resistance to staurosporine, and other drugs such as cycloheximide and caffeine. This Schizosaccharomyces pombe (strain 972 / ATCC 24843) (Fission yeast) protein is 26S proteasome regulatory subunit rpn11 (rpn11).